The sequence spans 156 residues: ATP synthase subunit b (156 aa).

Residues 7–27 (LFAQMVVFLILAWFTMKFVWP) traverse the membrane as a helical segment.

This sequence belongs to the ATPase B chain family. In terms of assembly, F-type ATPases have 2 components, F(1) - the catalytic core - and F(0) - the membrane proton channel. F(1) has five subunits: alpha(3), beta(3), gamma(1), delta(1), epsilon(1). F(0) has three main subunits: a(1), b(2) and c(10-14). The alpha and beta chains form an alternating ring which encloses part of the gamma chain. F(1) is attached to F(0) by a central stalk formed by the gamma and epsilon chains, while a peripheral stalk is formed by the delta and b chains.

Its subcellular location is the cell inner membrane. Its function is as follows. F(1)F(0) ATP synthase produces ATP from ADP in the presence of a proton or sodium gradient. F-type ATPases consist of two structural domains, F(1) containing the extramembraneous catalytic core and F(0) containing the membrane proton channel, linked together by a central stalk and a peripheral stalk. During catalysis, ATP synthesis in the catalytic domain of F(1) is coupled via a rotary mechanism of the central stalk subunits to proton translocation. Functionally, component of the F(0) channel, it forms part of the peripheral stalk, linking F(1) to F(0). This Paraburkholderia phytofirmans (strain DSM 17436 / LMG 22146 / PsJN) (Burkholderia phytofirmans) protein is ATP synthase subunit b.